We begin with the raw amino-acid sequence, 632 residues long: MVIDSKQDLPQYTKDSGSESDSDSSNNFIVESPSIPSSKSATVVLNSEEYEDDEGDDLNGLDAELIDNITYEGDEDETMFVGLKEKQKLHLSGVFRLQVVKGGIVYNNVHYNASREILTFWHPLSQSIPTIDFSHFAGWQDTFFMPRNNRFKIRDEEFKSFPCVLRVFNSNHTGLLEAGHLYRDVNYLWKPKEPYFPLNERTTYHLLHESDRIQSLSVPGYWSTPLEKLYLSHKNAAYDTRIMVIGGKNSGKSTFLRLLLEKFTQDIRDSTTSQEELVYLDLDPGQPEYSLPDSISLNKILSSPISLGQHLCQGSNFQTLLQFYAGSSSPQDEPTSYLNCADKLIDHLEEQAFFGTSLLNLPGWIKGFGMQILNHIIRKYKPTHLLFLETANSKRHLDELTIPQSFSTSLRDAYAPEVVRVPAHSLNHTLSSRFHASQLRTFKILALFHKITQFDYDFAPLLKSAPLQISYGKGKSGIKGIQFPMEFQDLNPQDIKSALEGTVIGIYTYSGEDSLEVKSLNTFPILQSCTSSSKNFITLGLIHSIDTSQQIMNIYVPPCHTQILDKQPEDAQWIIVRNKTETPFCDFLPSPRTITWDDNIQIPFATFERRKKLEHVWKVRKNVMRRGQFMKR.

Positions 1 to 42 (MVIDSKQDLPQYTKDSGSESDSDSSNNFIVESPSIPSSKSAT) are disordered. A compositionally biased stretch (polar residues) spans 26-42 (NNFIVESPSIPSSKSAT). Residue 246 to 253 (GGKNSGKS) coordinates ATP.

It belongs to the Clp1 family. NOL9/GRC3 subfamily.

The protein resides in the nucleus. The protein localises to the nucleolus. Polynucleotide 5'-kinase involved in rRNA processing. Required for the efficient termination by RNA polymerase I and the processing of the IST2 pre-rRNA internal transcribed spacer localized between the 5.8S and 25S rRNAs. May act by maintaining the phosphorylated status of the downstream RNT1 cleavage product, which in turn allows the torpedo activity of RAT1 to efficiently terminate Pol I transcription. In vitro, displays polynucleotide kinase activity on both single- and double-stranded RNA and on single-stranded DNA alone, but not double-stranded DNA alone. The protein is Polynucleotide 5'-hydroxyl-kinase GRC3 (GRC3) of Saccharomyces cerevisiae (strain ATCC 204508 / S288c) (Baker's yeast).